The chain runs to 97 residues: Small ribosomal subunit protein bS21 (97 aa).

Residues 37–97 form a disordered region; it reads EKPSVRKARE…APASSPTTTA (61 aa). Over residues 76–97 the composition is skewed to low complexity; it reads RAVAPRRPAAAPAPASSPTTTA.

This sequence belongs to the bacterial ribosomal protein bS21 family.

This chain is Small ribosomal subunit protein bS21, found in Methylobacterium sp. (strain 4-46).